A 185-amino-acid polypeptide reads, in one-letter code: Large ribosomal subunit protein uL22 (185 aa).

The disordered stretch occupies residues 157 to 185; that stretch reads VAAPSPEEDAPKKKQSKKKMARQKLMQRD. The segment covering 169 to 178 has biased composition (basic residues); that stretch reads KKQSKKKMAR.

It belongs to the universal ribosomal protein uL22 family.

This is Large ribosomal subunit protein uL22 (RpL17) from Ixodes scapularis (Black-legged tick).